Reading from the N-terminus, the 285-residue chain is Polyamine aminopropyltransferase (285 aa).

The 237-residue stretch at 5–241 (DTWFTEHFQA…GWWSVTLSSK (237 aa)) folds into the PABS domain. Gln-35 contacts S-methyl-5'-thioadenosine. Positions 66 and 90 each coordinate spermidine. Residues Asp-110 and 141 to 142 (DG) contribute to the S-methyl-5'-thioadenosine site. Asp-160 functions as the Proton acceptor in the catalytic mechanism. Spermidine is bound at residue 160 to 163 (DSTD). Pro-167 is an S-methyl-5'-thioadenosine binding site.

Belongs to the spermidine/spermine synthase family. As to quaternary structure, homodimer or homotetramer.

The protein resides in the cytoplasm. It carries out the reaction S-adenosyl 3-(methylsulfanyl)propylamine + putrescine = S-methyl-5'-thioadenosine + spermidine + H(+). Its pathway is amine and polyamine biosynthesis; spermidine biosynthesis; spermidine from putrescine: step 1/1. Catalyzes the irreversible transfer of a propylamine group from the amino donor S-adenosylmethioninamine (decarboxy-AdoMet) to putrescine (1,4-diaminobutane) to yield spermidine. This chain is Polyamine aminopropyltransferase, found in Xylella fastidiosa (strain M12).